The primary structure comprises 947 residues: Microtubule cross-linking factor 3 (947 aa).

The N-terminal stretch at 1-21 is a signal peptide; it reads MSQPPIGGAAPATAAASPAAA. 3 disordered regions span residues 1-251, 266-368, and 496-524; these read MSQP…SYWK, KERA…TLKN, and LSLK…DNED. 3 stretches are compositionally biased toward low complexity: residues 9–24, 72–81, and 109–137; these read AAPA…AATE, QQQLQQQQQQ, and APKG…ALGG. Residues 141–151 show a composition bias toward basic and acidic residues; sequence GPPEEPPRELE. Residues 164 to 180 are compositionally biased toward gly residues; it reads GEGGGGGGEGGGAGGGS. The span at 214–236 shows a compositional bias: low complexity; it reads ASPSPSSSSAGKTPGTGSRNSGS. A compositionally biased stretch (gly residues) spans 237–248; that stretch reads GVAGGGSGGGGS. 2 stretches are compositionally biased toward low complexity: residues 287-297 and 304-325; these read SSRSSPVSGPP and AVAS…AEGS. Residues 342–726 adopt a coiled-coil conformation; the sequence is HPQQLQEQEE…GKVMQLQYEN (385 aa). Composition is skewed to basic and acidic residues over residues 355 to 368 and 496 to 513; these read EMEK…TLKN and LSLK…EKKA. Ser569 carries the phosphoserine modification. The tract at residues 743-786 is disordered; the sequence is GIRGSPRDSDAESDAGKKESDDDSRPPHRKREGPIGGESDSEEV. Over residues 747–768 the composition is skewed to basic and acidic residues; that stretch reads SPRDSDAESDAGKKESDDDSRP. A Phosphoserine modification is found at Ser781. The stretch at 811–835 forms a coiled coil; it reads DRQQMKDIRSEAERLGKTIDRLIAD. A helical transmembrane segment spans residues 915–935; it reads PIILLILILVLFSSLSYTTIF.

Belongs to the MTCL family.

It localises to the membrane. The protein is Microtubule cross-linking factor 3 of Homo sapiens (Human).